A 521-amino-acid polypeptide reads, in one-letter code: Protein nucleotidyltransferase YdiU (521 aa).

8 residues coordinate ATP: G109, G111, R112, K131, D143, G144, R194, and R201. The active-site Proton acceptor is the D270. 2 residues coordinate Mg(2+): N271 and D280. D280 contributes to the ATP binding site.

It belongs to the SELO family. Requires Mg(2+) as cofactor. Mn(2+) is required as a cofactor.

The catalysed reaction is L-seryl-[protein] + ATP = 3-O-(5'-adenylyl)-L-seryl-[protein] + diphosphate. It catalyses the reaction L-threonyl-[protein] + ATP = 3-O-(5'-adenylyl)-L-threonyl-[protein] + diphosphate. The enzyme catalyses L-tyrosyl-[protein] + ATP = O-(5'-adenylyl)-L-tyrosyl-[protein] + diphosphate. It carries out the reaction L-histidyl-[protein] + UTP = N(tele)-(5'-uridylyl)-L-histidyl-[protein] + diphosphate. The catalysed reaction is L-seryl-[protein] + UTP = O-(5'-uridylyl)-L-seryl-[protein] + diphosphate. It catalyses the reaction L-tyrosyl-[protein] + UTP = O-(5'-uridylyl)-L-tyrosyl-[protein] + diphosphate. In terms of biological role, nucleotidyltransferase involved in the post-translational modification of proteins. It can catalyze the addition of adenosine monophosphate (AMP) or uridine monophosphate (UMP) to a protein, resulting in modifications known as AMPylation and UMPylation. The chain is Protein nucleotidyltransferase YdiU from Burkholderia pseudomallei (strain K96243).